We begin with the raw amino-acid sequence, 292 residues long: ATP synthase gamma chain (292 aa).

It belongs to the ATPase gamma chain family. F-type ATPases have 2 components, CF(1) - the catalytic core - and CF(0) - the membrane proton channel. CF(1) has five subunits: alpha(3), beta(3), gamma(1), delta(1), epsilon(1). CF(0) has three main subunits: a, b and c.

It localises to the cell inner membrane. In terms of biological role, produces ATP from ADP in the presence of a proton gradient across the membrane. The gamma chain is believed to be important in regulating ATPase activity and the flow of protons through the CF(0) complex. The chain is ATP synthase gamma chain from Magnetococcus marinus (strain ATCC BAA-1437 / JCM 17883 / MC-1).